Consider the following 219-residue polypeptide: Response regulator ArlR (219 aa).

Residues 3–116 (NILIVEDEQN…ELLARIRAVL (114 aa)) enclose the Response regulatory domain. A 4-aspartylphosphate modification is found at Asp-52. The ompR/PhoB-type DNA-binding region spans 122–219 (KDVLDINGII…TVRGVGYVIR (98 aa)).

Post-translationally, phosphorylated by ArlS.

Its subcellular location is the cytoplasm. Functionally, member of the two-component regulatory system ArlS/ArlR. The sequence is that of Response regulator ArlR (arlR) from Staphylococcus epidermidis (strain ATCC 35984 / DSM 28319 / BCRC 17069 / CCUG 31568 / BM 3577 / RP62A).